The sequence spans 875 residues: Probable ATP-dependent RNA helicase DDX10 (875 aa).

The disordered stretch occupies residues 1-44 (MGKTVASLGQGTRPDPVRSFNRWKKKHSHRQHQKKERRKQLKKP). The residue at position 4 (Thr-4) is a Phosphothreonine. Phosphoserine is present on Ser-7. The span at 21-41 (NRWKKKHSHRQHQKKERRKQL) shows a compositional bias: basic residues. The short motif at 69–97 (TRFSDFPLSKKTLKGLQEAQYRLVTEIQK) is the Q motif element. ATP is bound by residues 89-91 (YRL), Gln-96, and 113-120 (AKTGSGKT). A Helicase ATP-binding domain is found at 100–274 (IGLALQGKDV…RLSLKDPEYV (175 aa)). The DEAD box signature appears at 222–225 (DEAD). The Helicase C-terminal domain occupies 300 to 449 (KISVLFSFLR…EIKINPEKLI (150 aa)). The segment at 525-612 (LVKNPVTEAV…HTESVVSIEE (88 aa)) is disordered. Position 540 is a phosphoserine (Ser-540). The residue at position 556 (Lys-556) is an N6-acetyllysine. The span at 562 to 575 (KSGERLEETEHRLA) shows a compositional bias: basic and acidic residues. Acidic residues predominate over residues 578 to 593 (DGDEEQDEETEDEETE). Thr-587 bears the Phosphothreonine mark. Over residues 594–604 (DHLGKAREPHT) the composition is skewed to basic and acidic residues. A Glycyl lysine isopeptide (Lys-Gly) (interchain with G-Cter in SUMO2) cross-link involves residue Lys-652. Residues 734–744 (EEDKFDKEEYR) show a composition bias toward basic and acidic residues. Residues 734 to 860 (EEDKFDKEEY…VEPLDTGLSL (127 aa)) are disordered. The span at 745-754 (KKIKAKHRER) shows a compositional bias: basic residues. Positions 755-774 (RLKEREARREANKRQAKARD) are enriched in basic and acidic residues. A compositionally biased stretch (acidic residues) spans 775 to 789 (EEEAFLDWSDEDDGG). The residue at position 783 (Ser-783) is a Phosphoserine. Over residues 797-831 (DPDKHRSSEESESEDTNHKMSDTKKKQETRKRNNT) the composition is skewed to basic and acidic residues.

Belongs to the DEAD box helicase family. DDX10/DBP4 subfamily. In terms of assembly, interacts with AIM2; this interaction promotes AIM2 stability. Interacts with SCNA; this interaction causes DDX10 mislocalization to the nucleoplasm and cytoplasmic inclusions.

The protein localises to the cytoplasm. The protein resides in the nucleus. It localises to the nucleolus. It carries out the reaction ATP + H2O = ADP + phosphate + H(+). Its function is as follows. Putative ATP-dependent RNA helicase that plays various role in innate immunity or inflammation. Plays a role in the enhancement of AIM2-induced inflammasome activation by interacting with AIM2 and stabilizing its protein level. Negatively regulates viral infection by promoting interferon beta production and interferon stimulated genes/ISGs expression. The protein is Probable ATP-dependent RNA helicase DDX10 (Ddx10) of Mus musculus (Mouse).